The chain runs to 185 residues: Dihydrofolate reductase 1 (185 aa).

The 178-residue stretch at 8 to 185 folds into the DHFR domain; sequence ELVLVVAADE…QASPRPLDDL (178 aa).

This sequence belongs to the dihydrofolate reductase family.

The catalysed reaction is (6S)-5,6,7,8-tetrahydrofolate + NADP(+) = 7,8-dihydrofolate + NADPH + H(+). The protein operates within cofactor biosynthesis; tetrahydrofolate biosynthesis; 5,6,7,8-tetrahydrofolate from 7,8-dihydrofolate: step 1/1. Its function is as follows. Key enzyme in folate metabolism. Catalyzes an essential reaction for de novo glycine and purine synthesis, and for DNA precursor synthesis. This is Dihydrofolate reductase 1 (folA1) from Haloarcula marismortui (strain ATCC 43049 / DSM 3752 / JCM 8966 / VKM B-1809) (Halobacterium marismortui).